The chain runs to 121 residues: Large ribosomal subunit protein uL18 (121 aa).

Belongs to the universal ribosomal protein uL18 family. In terms of assembly, part of the 50S ribosomal subunit; part of the 5S rRNA/L5/L18/L25 subcomplex. Contacts the 5S and 23S rRNAs.

In terms of biological role, this is one of the proteins that bind and probably mediate the attachment of the 5S RNA into the large ribosomal subunit, where it forms part of the central protuberance. The sequence is that of Large ribosomal subunit protein uL18 from Geobacter metallireducens (strain ATCC 53774 / DSM 7210 / GS-15).